The chain runs to 365 residues: Tetraacyldisaccharide 4'-kinase (365 aa).

68-75 (VVGGAGKT) contacts ATP.

Belongs to the LpxK family.

The catalysed reaction is a lipid A disaccharide + ATP = a lipid IVA + ADP + H(+). Its pathway is glycolipid biosynthesis; lipid IV(A) biosynthesis; lipid IV(A) from (3R)-3-hydroxytetradecanoyl-[acyl-carrier-protein] and UDP-N-acetyl-alpha-D-glucosamine: step 6/6. In terms of biological role, transfers the gamma-phosphate of ATP to the 4'-position of a tetraacyldisaccharide 1-phosphate intermediate (termed DS-1-P) to form tetraacyldisaccharide 1,4'-bis-phosphate (lipid IVA). The sequence is that of Tetraacyldisaccharide 4'-kinase from Chlamydia pneumoniae (Chlamydophila pneumoniae).